The sequence spans 946 residues: Aminopeptidase N (946 aa).

Residues 1-15 form the signal peptide; that stretch reads MRLLICLTLLGLVCG. The N-linked (GlcNAc...) asparagine glycan is linked to N60. 308-312 contributes to the substrate binding site; the sequence is GAMEN. Position 344 (H344) interacts with Zn(2+). Catalysis depends on E345, which acts as the Proton acceptor. H348 and E367 together coordinate Zn(2+). Residues N550 and N605 are each glycosylated (N-linked (GlcNAc...) asparagine). Intrachain disulfides connect C715/C722 and C751/C787.

The protein belongs to the peptidase M1 family. It depends on Zn(2+) as a cofactor.

It is found in the cell membrane. It catalyses the reaction Release of an N-terminal amino acid, Xaa-|-Yaa- from a peptide, amide or arylamide. Xaa is preferably Ala, but may be most amino acids including Pro (slow action). When a terminal hydrophobic residue is followed by a prolyl residue, the two may be released as an intact Xaa-Pro dipeptide.. The sequence is that of Aminopeptidase N (APN1) from Plutella xylostella (Diamondback moth).